We begin with the raw amino-acid sequence, 268 residues long: Phosphatidylglycerol--prolipoprotein diacylglyceryl transferase (268 aa).

Transmembrane regions (helical) follow at residues 14-34 (LGPI…FAGW), 57-77 (LTFY…IIFY), 90-110 (FFLW…LIAF), and 117-137 (IGAN…IGLG). Residue Arg-140 coordinates a 1,2-diacyl-sn-glycero-3-phospho-(1'-sn-glycerol). 3 consecutive transmembrane segments (helical) span residues 174–194 (QLFE…LVTI), 200–220 (YLVL…CEFF), and 240–260 (ILSI…FIKI).

The protein belongs to the Lgt family.

It localises to the cell inner membrane. The catalysed reaction is L-cysteinyl-[prolipoprotein] + a 1,2-diacyl-sn-glycero-3-phospho-(1'-sn-glycerol) = an S-1,2-diacyl-sn-glyceryl-L-cysteinyl-[prolipoprotein] + sn-glycerol 1-phosphate + H(+). It participates in protein modification; lipoprotein biosynthesis (diacylglyceryl transfer). Catalyzes the transfer of the diacylglyceryl group from phosphatidylglycerol to the sulfhydryl group of the N-terminal cysteine of a prolipoprotein, the first step in the formation of mature lipoproteins. The polypeptide is Phosphatidylglycerol--prolipoprotein diacylglyceryl transferase (Francisella tularensis subsp. tularensis (strain FSC 198)).